Here is a 440-residue protein sequence, read N- to C-terminus: Chromosome partition protein MukF (440 aa).

The tract at residues 208-236 (LSETSGTLRELQDTLEAAGDKLQANLLRI) is leucine-zipper.

Belongs to the MukF family. Interacts, and probably forms a ternary complex, with MukE and MukB via its C-terminal region. The complex formation is stimulated by calcium or magnesium. It is required for an interaction between MukE and MukB.

Its subcellular location is the cytoplasm. The protein localises to the nucleoid. In terms of biological role, involved in chromosome condensation, segregation and cell cycle progression. May participate in facilitating chromosome segregation by condensation DNA from both sides of a centrally located replisome during cell division. Not required for mini-F plasmid partitioning. Probably acts via its interaction with MukB and MukE. Overexpression results in anucleate cells. It has a calcium binding activity. The polypeptide is Chromosome partition protein MukF (Photorhabdus laumondii subsp. laumondii (strain DSM 15139 / CIP 105565 / TT01) (Photorhabdus luminescens subsp. laumondii)).